The sequence spans 622 residues: Palmitoyltransferase pfa3 (622 aa).

At 1–38 (MDATPYTTSSTSTALDSPSSLSATMARRWARKLERYCC) the chain is on the cytoplasmic side. The helical transmembrane segment at 39–59 (TCVTYFPLAFVYSMTSWAAYV) threads the bilayer. The Vacuolar segment spans residues 60–76 (DVSLSTTPSRVTWLGHS). A helical transmembrane segment spans residues 77–97 (YGFIAVVLYLLANWCYTYAVF). The Cytoplasmic segment spans residues 98–175 (TSPGSTTNEY…ATCVGLRNHK (78 aa)). The DHHC domain maps to 132–182 (RFCKKCQARKPDRAHHCSTCRRCVLKMDHHCPWLATCVGLRNHKAFLLFLI). Residues 176–196 (AFLLFLIYTSVFCWVSFAGSA) traverse the membrane as a helical segment. Over 197-217 (SWVWEEIMSNTTYVETLMPVN) the chain is Vacuolar. Residues 218 to 238 (YIMLSVISGIIGIVLSAFCGW) traverse the membrane as a helical segment. The Cytoplasmic portion of the chain corresponds to 239–622 (HIYLASRGQT…EGRSNDDGVD (384 aa)). 3 disordered regions span residues 298–334 (PGVT…ELQA), 419–507 (REEQ…YADD), and 533–622 (DDVL…DGVD). The segment covering 302-311 (RPEEGEEMRR) has biased composition (basic and acidic residues). A compositionally biased stretch (polar residues) spans 313 to 330 (TTPSGSSQRNDLASQHNP). Basic and acidic residues predominate over residues 419-428 (REEQRQRERQ). Over residues 443–455 (YTPTWTPPNQQHP) the composition is skewed to polar residues. A compositionally biased stretch (low complexity) spans 466–488 (PSSQPQTQRNSNSSSPSFTPSRR). Over residues 533–547 (DDVLNDDDDDDEDYF) the composition is skewed to acidic residues. Basic and acidic residues predominate over residues 610-622 (NGEEGRSNDDGVD).

The protein belongs to the DHHC palmitoyltransferase family. PFA3 subfamily. Post-translationally, autopalmitoylated.

Its subcellular location is the vacuole membrane. It carries out the reaction L-cysteinyl-[protein] + hexadecanoyl-CoA = S-hexadecanoyl-L-cysteinyl-[protein] + CoA. In terms of biological role, palmitoyltransferase specific for vac8. Palmitoylates vac8 at one or more of its N-terminal cysteine residues, which is required for its proper membrane localization. This chain is Palmitoyltransferase pfa3 (ptr-3), found in Neurospora crassa (strain ATCC 24698 / 74-OR23-1A / CBS 708.71 / DSM 1257 / FGSC 987).